A 763-amino-acid polypeptide reads, in one-letter code: Lysine-specific histone demethylase 1 homolog 2 (763 aa).

Positions 53–152 constitute an SWIRM domain; it reads QRETETEALI…FGVSAAFPAS (100 aa). Residues glutamate 192, arginine 194, arginine 200, and glutamate 571 each coordinate FAD.

Belongs to the flavin monoamine oxidase family. The cofactor is FAD.

Its function is as follows. Probable histone demethylase. This chain is Lysine-specific histone demethylase 1 homolog 2, found in Oryza sativa subsp. japonica (Rice).